The following is a 247-amino-acid chain: Uridylate kinase (247 aa).

11 to 14 (KASG) lines the ATP pocket. The involved in allosteric activation by GTP stretch occupies residues 19–24 (GKQGFG). UMP is bound at residue Gly-53. Positions 54 and 58 each coordinate ATP. UMP contacts are provided by residues Asp-73 and 134–141 (TGNPFFTT). ATP contacts are provided by Thr-161, Gln-162, Tyr-167, and Asp-170.

This sequence belongs to the UMP kinase family. In terms of assembly, homohexamer.

The protein resides in the cytoplasm. It catalyses the reaction UMP + ATP = UDP + ADP. It participates in pyrimidine metabolism; CTP biosynthesis via de novo pathway; UDP from UMP (UMPK route): step 1/1. Its activity is regulated as follows. Allosterically activated by GTP. Inhibited by UTP. In terms of biological role, catalyzes the reversible phosphorylation of UMP to UDP. This Chelativorans sp. (strain BNC1) protein is Uridylate kinase.